Reading from the N-terminus, the 147-residue chain is Low molecular weight protein-tyrosine-phosphatase Wzb (147 aa).

The active-site Nucleophile is the Cys9. Arg15 is a catalytic residue. The active-site Proton donor is Asp115.

It belongs to the low molecular weight phosphotyrosine protein phosphatase family.

It carries out the reaction O-phospho-L-tyrosyl-[protein] + H2O = L-tyrosyl-[protein] + phosphate. It participates in glycan metabolism; exopolysaccharide biosynthesis. In terms of biological role, dephosphorylates Wzc. Required for the extracellular polysaccharide colanic acid synthesis. Probably involved in the export of colanic acid from the cell to medium. Involved in protection of cells against contact-dependent growth inhibition (CDI). This chain is Low molecular weight protein-tyrosine-phosphatase Wzb (wzb), found in Escherichia coli O157:H7.